A 285-amino-acid chain; its full sequence is Eukaryotic translation initiation factor 3 subunit F-2 (285 aa).

Residues 11–145 (VFLKPLVLFQ…TRLYCAVEMG (135 aa)) form the MPN domain.

It belongs to the eIF-3 subunit F family. Component of the eukaryotic translation initiation factor 3 (eIF-3) complex. The eIF-3 complex interacts with pix.

It localises to the cytoplasm. Its function is as follows. Component of the eukaryotic translation initiation factor 3 (eIF-3) complex, which is involved in protein synthesis of a specialized repertoire of mRNAs and, together with other initiation factors, stimulates binding of mRNA and methionyl-tRNAi to the 40S ribosome. The eIF-3 complex specifically targets and initiates translation of a subset of mRNAs involved in cell proliferation. This chain is Eukaryotic translation initiation factor 3 subunit F-2, found in Drosophila sechellia (Fruit fly).